Reading from the N-terminus, the 128-residue chain is Nanos homolog 1 (128 aa).

An essential for its translational repressor activity region spans residues 7–23; the sequence is FDSWSDYLGLSSLISRG. The segment at 23-56 is disordered; that stretch reads GLQPRGEGENPSPRWNVSCPAPAEPLPSKEPEGR. A Nanos-type zinc finger spans residues 60–114; that stretch reads GCGFCRSNKEAMSLYSSHRLRSLDGRVLCPVLRGYTCPLCGANGDWAHTMRYCPL. Residues C61, C64, H77, C88, C96, C99, H107, and C112 each contribute to the Zn(2+) site. Short sequence motifs (C2HC) lie at residues 61–88 and 96–112; these read CGFC…RVLC and CPLC…MRYC.

The protein belongs to the nanos family. As to quaternary structure, interacts with ccnb1.

It is found in the cytoplasm. Its subcellular location is the perinuclear region. In terms of biological role, acts as a translational repressor. Can mediate repression affecting different steps in the translation process: cap-driven, IRES-driven, polyadenylated RNAs or nonpolyadenylated RNAs. Essential for the development of primordial germ cells (PGCs) by ensuring their proper migration and survival. The protein is Nanos homolog 1 (nanos1) of Xenopus borealis (Kenyan clawed frog).